The sequence spans 330 residues: GMP reductase (330 aa).

Residue cysteine 180 is the Thioimidate intermediate of the active site. 209–232 (LIADGGIRHNGDIAKSVRFGASMV) lines the NADP(+) pocket.

The protein belongs to the IMPDH/GMPR family. GuaC type 2 subfamily.

The enzyme catalyses IMP + NH4(+) + NADP(+) = GMP + NADPH + 2 H(+). Functionally, catalyzes the irreversible NADPH-dependent deamination of GMP to IMP. It functions in the conversion of nucleobase, nucleoside and nucleotide derivatives of G to A nucleotides, and in maintaining the intracellular balance of A and G nucleotides. The sequence is that of GMP reductase from Lactobacillus gasseri (strain ATCC 33323 / DSM 20243 / BCRC 14619 / CIP 102991 / JCM 1131 / KCTC 3163 / NCIMB 11718 / NCTC 13722 / AM63).